The primary structure comprises 67 residues: Conotoxin Pu5.1 (67 aa).

A signal peptide spans 1–22 (MRCVPVFVILLLLIASTPSVDA). A propeptide spanning residues 23 to 51 (RPNPKDDVPLASFHEDANGILQMLWKKGR) is cleaved from the precursor. At Trp-63 the chain carries Tryptophan amide.

Belongs to the conotoxin T superfamily. Post-translationally, contains 2 disulfide bonds that can be either 'C1-C3, C2-C4' or 'C1-C4, C2-C3', since these disulfide connectivities have been observed for conotoxins with cysteine framework V (for examples, see AC P0DQQ7 and AC P81755). As to expression, expressed by the venom duct.

The protein resides in the secreted. This chain is Conotoxin Pu5.1, found in Conus pulicarius (Flea-bitten cone).